The chain runs to 64 residues: Cytochrome c oxidase subunit 5C-2 (64 aa).

The helical transmembrane segment at 15 to 34 (SVVKELVIGTVLGLAAGGLW) threads the bilayer.

Belongs to the cytochrome c oxidase subunit 5C family.

Its subcellular location is the mitochondrion inner membrane. This protein is one of the nuclear-coded polypeptide chains of cytochrome c oxidase, the terminal oxidase in mitochondrial electron transport. This Helianthus annuus (Common sunflower) protein is Cytochrome c oxidase subunit 5C-2 (COX5C2).